Reading from the N-terminus, the 327-residue chain is ATP-dependent 6-phosphofructokinase (327 aa).

Glycine 12 serves as a coordination point for ATP. ADP contacts are provided by residues arginine 22–arginine 26 and arginine 55–aspartate 60. Residues arginine 73–phenylalanine 74 and glycine 103–serine 106 each bind ATP. Residue aspartate 104 coordinates Mg(2+). Residue threonine 127–aspartate 129 participates in substrate binding. Aspartate 129 serves as the catalytic Proton acceptor. Arginine 156 serves as a coordination point for ADP. Substrate-binding positions include arginine 164 and methionine 171–arginine 173. Residues glycine 187 to glutamate 189, lysine 213, and lysine 215 to histidine 217 each bind ADP. Substrate contacts are provided by residues glutamate 224, arginine 245, and histidine 251–arginine 254.

Belongs to the phosphofructokinase type A (PFKA) family. ATP-dependent PFK group I subfamily. Prokaryotic clade 'B1' sub-subfamily. Homotetramer. Requires Mg(2+) as cofactor.

It localises to the cytoplasm. The enzyme catalyses beta-D-fructose 6-phosphate + ATP = beta-D-fructose 1,6-bisphosphate + ADP + H(+). Its pathway is carbohydrate degradation; glycolysis; D-glyceraldehyde 3-phosphate and glycerone phosphate from D-glucose: step 3/4. Allosterically activated by ADP and other diphosphonucleosides, and allosterically inhibited by phosphoenolpyruvate. In terms of biological role, catalyzes the phosphorylation of D-fructose 6-phosphate to fructose 1,6-bisphosphate by ATP, the first committing step of glycolysis. This is ATP-dependent 6-phosphofructokinase from Yersinia pseudotuberculosis serotype IB (strain PB1/+).